The sequence spans 672 residues: APC membrane recruitment protein 2 (672 aa).

Residues M1–R21 show a composition bias toward gly residues. Disordered stretches follow at residues M1–G23, T74–A360, and M443–C560. A compositionally biased stretch (low complexity) spans G142–L158. S154 carries the post-translational modification Phosphoserine. 2 stretches are compositionally biased toward basic and acidic residues: residues G163–A175 and R201–V210. Phosphoserine occurs at positions 223, 227, and 244. Basic and acidic residues predominate over residues C230–A254. Residues G255–S269 show a composition bias toward low complexity. Phosphoserine is present on S284. Over residues S289–P303 the composition is skewed to basic and acidic residues. Low complexity predominate over residues A343–P354. Phosphoserine occurs at positions 356 and 359. Residues Q446–G457 are compositionally biased toward low complexity. Composition is skewed to basic and acidic residues over residues R478–S488 and Q502–E516.

Belongs to the Amer family. Interacts with APC.

It localises to the cell membrane. Functionally, negative regulator of the canonical Wnt signaling pathway involved in neuroectodermal patterning. Acts by specifically binding phosphatidylinositol 4,5-bisphosphate (PtdIns(4,5)P2), translocating to the cell membrane and interacting with key regulators of the canonical Wnt signaling pathway, such as components of the beta-catenin destruction complex. The sequence is that of APC membrane recruitment protein 2 (Amer2) from Mus musculus (Mouse).